The sequence spans 329 residues: MSTSGTFFADNSQTIGKTPLVRLNRIVKGAPATVLAKIEGRNPAYSVKCRIGAAMIWDAEQRGLLGPGKELIEPTSGNTGIALAFVAAARGIPLTLTMPETMSLERRKLLAAYGAKLVLTEGVKGMTGAVRRAEDIAASDPDRYVLLQQFRNPANPAIHEQTTGPEIWEDTGGAIDILVSGVGTGGTITGVSRYIKQTQGKPILSVAVEPEASPVISQQRSGLPLKPGPHKIQGIGAGFIPENLDLSLVDQVERVSNEEAIAYARRLAQEEGLISGISCGAAVAAAVRLAQQSEHAGKTIVVVLPDSGERYLSTALFDGIFNEQGLAVV.

K48 bears the N6-(pyridoxal phosphate)lysine mark. Pyridoxal 5'-phosphate-binding positions include N78, 183-187 (GTGGT), and S278.

Belongs to the cysteine synthase/cystathionine beta-synthase family. Homodimer. Requires pyridoxal 5'-phosphate as cofactor.

It catalyses the reaction O-acetyl-L-serine + hydrogen sulfide = L-cysteine + acetate. It participates in amino-acid biosynthesis; L-cysteine biosynthesis; L-cysteine from L-serine: step 2/2. In terms of biological role, catalyzes the conversion of O-acetylserine (OAS) to cysteine through the elimination of acetate and addition of hydrogen sulfide. This Synechococcus elongatus (strain ATCC 33912 / PCC 7942 / FACHB-805) (Anacystis nidulans R2) protein is Cysteine synthase (srpG).